A 217-amino-acid polypeptide reads, in one-letter code: NADH dehydrogenase (ubiquinone) 23 kDa subunit (217 aa).

The transit peptide at 1 to 26 (MSLTMRIFTASRNGQRLFGSHGARLL) directs the protein to the mitochondrion. 4Fe-4S ferredoxin-type domains follow at residues 109–138 (RRYP…IEAE) and 148–177 (TRYD…EGPN). [4Fe-4S] cluster is bound by residues C118, C121, C124, C128, C157, C160, C163, and C167.

This sequence belongs to the complex I 23 kDa subunit family. Part of the mitochondrial membrane respiratory chain NADH dehydrogenase (Complex I). This is a component of the iron-sulfur (IP) fragment of the enzyme. Requires [4Fe-4S] cluster as cofactor. Expressed in muscles (at protein level).

Its subcellular location is the mitochondrion. It carries out the reaction a ubiquinone + NADH + 5 H(+)(in) = a ubiquinol + NAD(+) + 4 H(+)(out). In terms of biological role, core subunit of the mitochondrial membrane respiratory chain NADH dehydrogenase (Complex I) that is believed to belong to the minimal assembly required for catalysis. Complex I functions in the transfer of electrons from NADH to the respiratory chain. The immediate electron acceptor for the enzyme is believed to be ubiquinone. The polypeptide is NADH dehydrogenase (ubiquinone) 23 kDa subunit (Drosophila melanogaster (Fruit fly)).